The following is a 51-amino-acid chain: Large ribosomal subunit protein eL39 (51 aa).

This sequence belongs to the eukaryotic ribosomal protein eL39 family.

In Pyrobaculum aerophilum (strain ATCC 51768 / DSM 7523 / JCM 9630 / CIP 104966 / NBRC 100827 / IM2), this protein is Large ribosomal subunit protein eL39 (rpl39e).